Reading from the N-terminus, the 467-residue chain is Xanthan biosynthesis protein XanB (467 aa).

The protein belongs to the mannose-6-phosphate isomerase type 2 family.

The catalysed reaction is D-mannose 6-phosphate = D-fructose 6-phosphate. The enzyme catalyses alpha-D-mannose 1-phosphate + GTP + H(+) = GDP-alpha-D-mannose + diphosphate. Its pathway is nucleotide-sugar biosynthesis; GDP-alpha-D-mannose biosynthesis; GDP-alpha-D-mannose from alpha-D-mannose 1-phosphate (GTP route): step 1/1. It participates in nucleotide-sugar biosynthesis; GDP-alpha-D-mannose biosynthesis; alpha-D-mannose 1-phosphate from D-fructose 6-phosphate: step 1/2. In terms of biological role, involved in xanthan production. This Xanthomonas campestris pv. campestris (strain ATCC 33913 / DSM 3586 / NCPPB 528 / LMG 568 / P 25) protein is Xanthan biosynthesis protein XanB (xanB).